Consider the following 538-residue polypeptide: Adenine deaminase (538 aa).

This sequence belongs to the metallo-dependent hydrolases superfamily. Adenine deaminase family. Requires Mn(2+) as cofactor.

The enzyme catalyses adenine + H2O + H(+) = hypoxanthine + NH4(+). The protein is Adenine deaminase of Methanothermobacter thermautotrophicus (strain ATCC 29096 / DSM 1053 / JCM 10044 / NBRC 100330 / Delta H) (Methanobacterium thermoautotrophicum).